We begin with the raw amino-acid sequence, 66 residues long: KEGYPVDWGNCKYECMSDAYCKDLCVDRKAKSGYCYKLNWSCYCEGLPDDSPIKTNGHCRPGGRRK.

Residues 1–60 enclose the LCN-type CS-alpha/beta domain; the sequence is KEGYPVDWGNCKYECMSDAYCKDLCVDRKAKSGYCYKLNWSCYCEGLPDDSPIKTNGHCR. 4 cysteine pairs are disulfide-bonded: C11/C59, C15/C35, C21/C42, and C25/C44.

Belongs to the long (4 C-C) scorpion toxin superfamily. Sodium channel inhibitor family. Alpha subfamily. In terms of tissue distribution, expressed by the venom gland.

The protein localises to the secreted. Functionally, alpha toxins bind voltage-independently at site-3 of sodium channels (Nav) and inhibits the inactivation of the activated channels, thereby blocking neuronal transmission. The sequence is that of Putative alpha-neurotoxin RjAa13 from Rhopalurus junceus (Caribbean blue scorpion).